The following is an 816-amino-acid chain: Sodium/hydrogen exchanger 1 (816 aa).

Topologically, residues 1 to 98 (MLLWSAVRGL…FPVLGIDYTH (98 aa)) are extracellular. Polar residues predominate over residues 37-50 (LQLSPTDSTTPDSQ). Residues 37-79 (LQLSPTDSTTPDSQPSRERSIGDVTTAPPEVTPESRPVNRSVT) form a disordered region. N-linked (GlcNAc...) asparagine glycosylation occurs at asparagine 75. Residues 99–121 (VRTPFEISLWILLACLMKIGFHV) form a helical membrane-spanning segment. The Cytoplasmic portion of the chain corresponds to 122–130 (IPTISSIVP). The helical transmembrane segment at 131-148 (ESCLLIVVGLLVGGLIKG) threads the bilayer. Residues 149–158 (VGEKPPFLQS) are Extracellular-facing. The helical transmembrane segment at 159 to 176 (EVFFLFLLPPIILDAGYF) threads the bilayer. Residues 177–186 (LPLRQFTENL) lie on the Cytoplasmic side of the membrane. Residues 187–215 (GTILIFAVVGTLWNAFFLGGLMYAVCLVG) traverse the membrane as a helical segment. At 216–222 (GEQINNI) the chain is on the extracellular side. A helical transmembrane segment spans residues 223–249 (GLLDNLLFGSIISAVDPVAVLAVFEEI). Residues 250-252 (HIN) are Cytoplasmic-facing. A helical transmembrane segment spans residues 253 to 283 (ELLHILVFGESLLNDAVTVVLYHLFEEFANY). The Extracellular portion of the chain corresponds to 284–287 (DHVG). The helical transmembrane segment at 288-322 (IVDIVLGFLSFFVVALGGVFVGVVYGVIAAFTSRF) threads the bilayer. Over 323-328 (TAHIRV) the chain is Cytoplasmic. A helical membrane pass occupies residues 329–341 (IEPLFVFLYSYMA). The Extracellular segment spans residues 342–350 (YLSAELFHL). The helical transmembrane segment at 351-371 (SGIMALIASGVVMRPYVEANI) threads the bilayer. Residues 372–373 (SH) lie on the Cytoplasmic side of the membrane. Residues 374 to 404 (KSHTTIKYFLKMWSSVSETLIFIFLGVSTVA) form a helical membrane-spanning segment. Residues 405–410 (GSHHWN) are Extracellular-facing. A helical membrane pass occupies residues 411–438 (WTFVISTLLFCLIARVLGVLGLTWFINK). Residues 439–444 (FRIVKL) are Cytoplasmic-facing. Residues 445–469 (TPKDQFIIAYGGLRGAIAFSLGYLL) traverse the membrane as a helical segment. The Extracellular portion of the chain corresponds to 470–475 (DKKHFP). Residues 476 to 505 (MCDLFLTAIITVIFFTVFVQGMTIRPLVDL) traverse the membrane as a helical segment. The interaction with TESC stretch occupies residues 503–545 (VDLLAVKKKQETKRSINEEIHTQFLDHLLTGIEDICGHYGHHH). Residues 506 to 816 (LAVKKKQETK…EGEPFIPKGQ (311 aa)) are Cytoplasmic-facing. The segment at 509–516 (KKKQETKR) is PI(4,5)P2-binding region. Residues 515-545 (KRSINEEIHTQFLDHLLTGIEDICGHYGHHH) are interaction with CHP2. A confers pH-dependent PI(4,5)P2 binding region spans residues 540–545 (HYGHHH). A PI(4,5)P2-binding region region spans residues 552 to 560 (RFNKKYVKK). Serine 599 and serine 602 each carry phosphoserine. Residue threonine 603 is modified to Phosphothreonine. Residues serine 605 and serine 648 each carry the phosphoserine modification. The segment at 633–816 (KILRNNLQKT…EGEPFIPKGQ (184 aa)) is interaction with TESC. Residues 633–816 (KILRNNLQKT…EGEPFIPKGQ (184 aa)) are interaction with CALM1. Positions 684-687 (LTVP) are interaction with PPP3CA. Phosphoserine is present on residues serine 693, serine 697, and serine 703. The interaction with PPP3CA stretch occupies residues 715-720 (PVITID). Phosphoserine is present on residues serine 723, serine 726, serine 729, serine 786, serine 788, and serine 797. The interval 748–816 (PRVAEEAAEE…EGEPFIPKGQ (69 aa)) is disordered. Residues 783–792 (PSDSPSSQRM) are compositionally biased toward polar residues.

The protein belongs to the monovalent cation:proton antiporter 1 (CPA1) transporter (TC 2.A.36) family. As to quaternary structure, homodimer; dimerization is crucial for its function. Oligomer. Interacts with CALM in a calcium-dependent manner. Interacts with TESC. Interacts (via the juxtamembrane region of the cytoplasmic C-terminal domain) with CHP1; the interaction occurs at the plasma membrane in a calcium-dependent manner. Interacts with CHP2; the interaction occurs in a calcium-dependent manner. Interacts with EZR; regulates the cytoskeletal interactions of SLC9A1 and promotes stress fiber formation. Ubiquitinated, leading to its degradation by the proteasome. Ubiquitination is reduced by CHP1. In terms of processing, O-glycosylated. Post-translationally, palmitoylated; may play a major role in SLC9A1 regulation. Phosphorylation at Ser-648 by AKT1 reduces SLC9A1 binding to CALM1. Kidney and intestine.

Its subcellular location is the cell membrane. The protein resides in the basolateral cell membrane. It catalyses the reaction Na(+)(in) + H(+)(out) = Na(+)(out) + H(+)(in). The enzyme catalyses Li(+)(out) + H(+)(in) = Li(+)(in) + H(+)(out). It carries out the reaction Li(+)(in) + Na(+)(out) = Li(+)(out) + Na(+)(in). Its activity is regulated as follows. Activated at acidic pHs. Inhibited by cariporide and eniporide. Phosphatidylinositol 4,5-bisphosphate (PI(4,5)P2) and phosphatidylinositol 3,4,5-trisphosphate (PI(3,4,5)P3) bind and differentially regulate SLC9A1 activity. Its function is as follows. Electroneutral Na(+) /H(+) antiporter that extrudes Na(+) in exchange for external protons driven by the inward sodium ion chemical gradient, protecting cells from acidification that occurs from metabolism. Exchanges intracellular H(+) ions for extracellular Na(+) in 1:1 stoichiometry. Plays a key role in maintening intracellular pH neutral and cell volume, and thus is important for cell growth, proliferation, migration and survival. In addition, can transport lithium Li(+) and functions also as a Na(+)/Li(+) antiporter. SLC9A1 also functions in membrane anchoring and organization of scaffolding complexes that coordinate signaling inputs. In Oryctolagus cuniculus (Rabbit), this protein is Sodium/hydrogen exchanger 1 (SLC9A1).